The primary structure comprises 268 residues: Pantothenate synthetase (268 aa).

Position 18 to 25 (18 to 25 (MGYLHEGH)) interacts with ATP. The Proton donor role is filled by H25. A (R)-pantoate-binding site is contributed by Q49. Q49 provides a ligand contact to beta-alanine. Residue 135-138 (GQKD) coordinates ATP. Q141 is a binding site for (R)-pantoate. Residues I164 and 172–175 (LSSR) contribute to the ATP site.

This sequence belongs to the pantothenate synthetase family. Homodimer.

The protein localises to the cytoplasm. It catalyses the reaction (R)-pantoate + beta-alanine + ATP = (R)-pantothenate + AMP + diphosphate + H(+). It functions in the pathway cofactor biosynthesis; (R)-pantothenate biosynthesis; (R)-pantothenate from (R)-pantoate and beta-alanine: step 1/1. Functionally, catalyzes the condensation of pantoate with beta-alanine in an ATP-dependent reaction via a pantoyl-adenylate intermediate. The chain is Pantothenate synthetase from Dehalococcoides mccartyi (strain CBDB1).